Consider the following 637-residue polypeptide: Threonine--tRNA ligase (637 aa).

The 61-residue stretch at 1–61 (MLNITLPDGS…VEDSAVQIIT (61 aa)) folds into the TGS domain. Residues 242 to 533 (DHRKLGKQLD…LIENHAGSFP (292 aa)) are catalytic. Zn(2+) contacts are provided by cysteine 333, histidine 384, and histidine 510.

Belongs to the class-II aminoacyl-tRNA synthetase family. In terms of assembly, homodimer. Zn(2+) is required as a cofactor.

Its subcellular location is the cytoplasm. It catalyses the reaction tRNA(Thr) + L-threonine + ATP = L-threonyl-tRNA(Thr) + AMP + diphosphate + H(+). Functionally, catalyzes the attachment of threonine to tRNA(Thr) in a two-step reaction: L-threonine is first activated by ATP to form Thr-AMP and then transferred to the acceptor end of tRNA(Thr). Also edits incorrectly charged L-seryl-tRNA(Thr). This chain is Threonine--tRNA ligase, found in Neisseria meningitidis serogroup A / serotype 4A (strain DSM 15465 / Z2491).